The chain runs to 720 residues: Glycine--tRNA ligase beta subunit (720 aa).

This sequence belongs to the class-II aminoacyl-tRNA synthetase family. Tetramer of two alpha and two beta subunits.

Its subcellular location is the cytoplasm. It carries out the reaction tRNA(Gly) + glycine + ATP = glycyl-tRNA(Gly) + AMP + diphosphate. The chain is Glycine--tRNA ligase beta subunit from Acidovorax sp. (strain JS42).